Here is a 213-residue protein sequence, read N- to C-terminus: Adenylate kinase (213 aa).

10-15 (GAGKGT) is an ATP binding site. The tract at residues 30–59 (STGDMLRAAVAAGSEVGLRAKAAMESGSLV) is NMP. AMP is bound by residues threonine 31, arginine 36, 57-59 (SLV), 85-88 (GFPR), and glutamine 92. Residues 126–163 (GRSSCEKCGEGYHDSFKPSAQPNVCDKCSGTLKRRADD) form an LID region. Arginine 127 is a binding site for ATP. Residues cysteine 130, cysteine 133, cysteine 150, and cysteine 153 each contribute to the Zn(2+) site. Residues arginine 160 and arginine 171 each coordinate AMP. Glutamine 199 is a binding site for ATP.

Belongs to the adenylate kinase family. In terms of assembly, monomer.

It localises to the cytoplasm. It catalyses the reaction AMP + ATP = 2 ADP. It participates in purine metabolism; AMP biosynthesis via salvage pathway; AMP from ADP: step 1/1. Its function is as follows. Catalyzes the reversible transfer of the terminal phosphate group between ATP and AMP. Plays an important role in cellular energy homeostasis and in adenine nucleotide metabolism. This chain is Adenylate kinase, found in Magnetococcus marinus (strain ATCC BAA-1437 / JCM 17883 / MC-1).